The chain runs to 319 residues: Cell division protein FtsN (319 aa).

Residues 1–30 (MAQRDYVRRSQPAPSRRKKSTSRKKQRNLP) form a disordered region. At 1 to 33 (MAQRDYVRRSQPAPSRRKKSTSRKKQRNLPAVS) the chain is on the cytoplasmic side. The segment at 4–6 (RDY) is mediates interaction with FtsA. Over residues 15–27 (SRRKKSTSRKKQR) the composition is skewed to basic residues. Residues 34 to 54 (PAMVAIAAAVLVTFIGGLYFI) form a helical membrane-spanning segment. Topologically, residues 55 to 319 (THHKKEESET…TNCIRLAAGG (265 aa)) are periplasmic. Disordered stretches follow at residues 60-79 (EESETLQSQKVTGNGLPPKP) and 89-113 (LESRQPGVRAPTEPSAGGEVKTPEQ). 4 tandem repeats follow at residues 115–120 (TPEQRQ), 145–150 (TPEQRQ), 197–200 (QSKP), and 220–223 (QSKP). Residues 115 to 150 (TPEQRQLLEQMQADMRQQPTQLVEVPWNEQTPEQRQ) form a 2 X 6 AA repeats region. Residues 140-245 (PWNEQTPEQR…PKPTAEKKDE (106 aa)) form a disordered region. The segment covering 143–171 (EQTPEQRQQTLQRQRQAQQLAEQQRLAQQ) has biased composition (low complexity). The span at 172 to 221 (SRTTEQSWQQQTRTSQAAPVQAQPRQSKPASSQQPYQDLLQTPAHTTAQS) shows a compositional bias: polar residues. The interval 197-223 (QSKPASSQQPYQDLLQTPAHTTAQSKP) is 2 X 4 AA repeats. Residues 222-238 (KPQQAAPVARAADAPKP) are compositionally biased toward low complexity. The region spanning 242–316 (KKDERRWMVQ…AGHTNCIRLA (75 aa)) is the SPOR domain. A disulfide bridge connects residues Cys252 and Cys312.

Belongs to the FtsN family. As to quaternary structure, interacts with FtsA via its N-terminal cytoplasmic domain. Interacts with ZapA, FtsQ, FtsW and FtsI.

The protein localises to the cell inner membrane. Its function is as follows. Essential cell division protein that activates septal peptidoglycan synthesis and constriction of the cell. Acts on both sides of the membrane, via interaction with FtsA in the cytoplasm and interaction with the FtsQBL complex in the periplasm. These interactions may induce a conformational switch in both FtsA and FtsQBL, leading to septal peptidoglycan synthesis by FtsI and associated synthases. Required for full FtsI activity. Required for recruitment of AmiC to the septal ring. The chain is Cell division protein FtsN from Escherichia coli (strain K12).